The primary structure comprises 317 residues: 4-hydroxy-3-methylbut-2-enyl diphosphate reductase (317 aa).

Cysteine 12 lines the [4Fe-4S] cluster pocket. Residues histidine 41 and histidine 74 each coordinate (2E)-4-hydroxy-3-methylbut-2-enyl diphosphate. Dimethylallyl diphosphate contacts are provided by histidine 41 and histidine 74. Isopentenyl diphosphate-binding residues include histidine 41 and histidine 74. Residue cysteine 96 participates in [4Fe-4S] cluster binding. Histidine 124 provides a ligand contact to (2E)-4-hydroxy-3-methylbut-2-enyl diphosphate. Histidine 124 contacts dimethylallyl diphosphate. Histidine 124 contacts isopentenyl diphosphate. Glutamate 126 acts as the Proton donor in catalysis. Threonine 168 contacts (2E)-4-hydroxy-3-methylbut-2-enyl diphosphate. Cysteine 198 lines the [4Fe-4S] cluster pocket. (2E)-4-hydroxy-3-methylbut-2-enyl diphosphate is bound by residues serine 226, serine 227, asparagine 228, and serine 270. 4 residues coordinate dimethylallyl diphosphate: serine 226, serine 227, asparagine 228, and serine 270. The isopentenyl diphosphate site is built by serine 226, serine 227, asparagine 228, and serine 270.

This sequence belongs to the IspH family. Requires [4Fe-4S] cluster as cofactor.

The catalysed reaction is isopentenyl diphosphate + 2 oxidized [2Fe-2S]-[ferredoxin] + H2O = (2E)-4-hydroxy-3-methylbut-2-enyl diphosphate + 2 reduced [2Fe-2S]-[ferredoxin] + 2 H(+). It carries out the reaction dimethylallyl diphosphate + 2 oxidized [2Fe-2S]-[ferredoxin] + H2O = (2E)-4-hydroxy-3-methylbut-2-enyl diphosphate + 2 reduced [2Fe-2S]-[ferredoxin] + 2 H(+). It participates in isoprenoid biosynthesis; dimethylallyl diphosphate biosynthesis; dimethylallyl diphosphate from (2E)-4-hydroxy-3-methylbutenyl diphosphate: step 1/1. The protein operates within isoprenoid biosynthesis; isopentenyl diphosphate biosynthesis via DXP pathway; isopentenyl diphosphate from 1-deoxy-D-xylulose 5-phosphate: step 6/6. Functionally, catalyzes the conversion of 1-hydroxy-2-methyl-2-(E)-butenyl 4-diphosphate (HMBPP) into a mixture of isopentenyl diphosphate (IPP) and dimethylallyl diphosphate (DMAPP). Acts in the terminal step of the DOXP/MEP pathway for isoprenoid precursor biosynthesis. This Hahella chejuensis (strain KCTC 2396) protein is 4-hydroxy-3-methylbut-2-enyl diphosphate reductase.